The following is a 416-amino-acid chain: Gasdermin-B (416 aa).

Positions 1-280 are triggers pyroptosis; sequence MFSVFEEITR…EKRKDVLNSL (280 aa). The next 2 beta stranded transmembrane spans lie at 83–101 and 102–125; these read EFQI…VRLP and KEIT…ENRI. (Microbial infection) Glycyl lysine isopeptide (Lys-Gly) (interchain with G-Cter in ubiquitin) cross-links involve residues K166, K177, K190, and K192. A run of 2 beta stranded transmembrane segments spans residues 167–183 and 184–198; these read EETL…SQIS and QGHL…REVT. The disordered stretch occupies residues 229-250; sequence KSFPEEKDGASSCLGKSLGSED. A coiled-coil region spans residues 248–276; that stretch reads SEDSRNMKEKLEDMESVLKDLTEEKRKDV. M308 participates in a covalent cross-link: (Microbial infection) Glycyl lysine isopeptide (Lys-Gly) (interchain with G-Cter in ubiquitin).

The protein belongs to the gasdermin family. Homooligomer; homooligomeric ring-shaped pore complex containing 24-26 subunits when inserted in the membrane. Post-translationally, cleavage by granzyme A (GZMA) relieves autoinhibition by releasing the N-terminal moiety (Gasdermin-B, N-terminal) that initiates pyroptosis. Not cleaved by other granzymes. Major cleavage site takes places after Lys-244; a minor cleavage site takes place after Lys-229. Cleavage by neutrophil elastase ELANE, inhibits its ability to trigger pyroptosis. Palmitoylated. In terms of processing, (Microbial infection) Ubiquitinated by S.flexneri IpaH7.8, leading to its degradation by the proteasome, thereby preventing its ability to form pores in bacterial-derived membranes. As to expression, in the gastrointestinal tract, expressed in proliferating cells, including in the basal cell layer of esophagus and in isthmus/neck of stomach.

Its subcellular location is the cytoplasm. The protein localises to the cell membrane. The full-length protein before cleavage is inactive: intramolecular interactions between N- and C-terminal domains mediate autoinhibition in the absence of activation signal. The intrinsic pyroptosis-inducing activity is carried by the released N-terminal moiety (Gasdermin-B, N-terminal) following cleavage by granzyme A (GZMA). In terms of biological role, precursor of a pore-forming protein that acts as a downstream mediator of granzyme-mediated cell death. This form constitutes the precursor of the pore-forming protein: upon cleavage, the released N-terminal moiety (Gasdermin-B, N-terminal) binds to membranes and forms pores, triggering pyroptosis. Also acts as a regulator of epithelial cell repair independently of programmed cell death: translocates to the plasma membrane and promotes epithelial maintenance and repair by regulating PTK2/FAK-mediated phosphorylation of PDGFA. Pore-forming protein produced by cleavage by granzyme A (GZMA), which causes membrane permeabilization and pyroptosis in target cells of cytotoxic T and natural killer (NK) cells. Key downstream mediator of granzyme-mediated cell death: (1) granzyme A (GZMA), delivered to target cells from cytotoxic T- and NK-cells, (2) specifically cleaves Gasdermin-B to generate this form. After cleavage, moves to the plasma membrane, homooligomerizes within the membrane and forms pores of 10-15 nanometers (nm) of inner diameter, triggering pyroptosis. The different isoforms recognize and bind different phospholipids on membranes, promoting cell death of different target cells. Its function is as follows. Precursor of a pore-forming protein that acts as a downstream mediator of granzyme-mediated cell death and mediates pyroptosis. Following cleavage and activation by granzyme A (GZMA), the N-terminal part binds to membrane inner leaflet lipids, homooligomerizes within the human plasma membrane and forms pores of 10-15 nanometers (nm) of inner diameter, triggering pyroptosis. Recognizes and binds membrane inner leaflet lipids of human cells, such as phosphatidylinositol 4-phosphate, phosphatidylinositol 5-phosphate, bisphosphorylated phosphatidylinositols, such as phosphatidylinositol (4,5)-bisphosphate, and more weakly to phosphatidic acid. Also binds sufatide, a component of the apical membrane of epithelial cells. Functionally, precursor of a pore-forming protein that acts as a downstream mediator of granzyme-mediated cell death and mediates pyroptosis of human cells. Following cleavage and activation by granzyme A (GZMA), the N-terminal part binds to membrane inner leaflet lipids, homooligomerizes within the human plasma membrane and forms pores of 10-15 nanometers (nm) of inner diameter, triggering pyroptosis. In terms of biological role, precursor of a pore-forming protein that acts as a downstream mediator of granzyme-mediated cell death and specifically mediates cell death of Gram-negative bacteria in response to infection. Following cleavage and activation by granzyme A (GZMA), the N-terminal part recognizes and binds phospholipids found on Gram-negative bacterial membranes, such as lipid A and cariolipin, homooligomerizes within the bacterial membranes and forms pores, triggering pyroptosis followed by cell death. In contrast to isoform 4, does not bind to membrane inner leaflet lipids of host human cell, such as phosphatidylinositol 4-phosphate, phosphatidylinositol 5-phosphate, bisphosphorylated phosphatidylinositols, such as phosphatidylinositol (4,5)-bisphosphate. Not able to trigger pyroptosis. In Homo sapiens (Human), this protein is Gasdermin-B.